Reading from the N-terminus, the 475-residue chain is uncharacterized protein (475 aa).

The helical transmembrane segment at 19–39 (LVSAILILSILIWLIITIFFA) threads the bilayer.

Its subcellular location is the membrane. This is an uncharacterized protein from Mycoplasma pneumoniae (strain ATCC 29342 / M129 / Subtype 1) (Mycoplasmoides pneumoniae).